A 159-amino-acid polypeptide reads, in one-letter code: SsrA-binding protein (159 aa).

Positions 132–159 (KDFDKRHTEKERDSDREIQRAMRHGKDD) are disordered.

This sequence belongs to the SmpB family.

The protein localises to the cytoplasm. Required for rescue of stalled ribosomes mediated by trans-translation. Binds to transfer-messenger RNA (tmRNA), required for stable association of tmRNA with ribosomes. tmRNA and SmpB together mimic tRNA shape, replacing the anticodon stem-loop with SmpB. tmRNA is encoded by the ssrA gene; the 2 termini fold to resemble tRNA(Ala) and it encodes a 'tag peptide', a short internal open reading frame. During trans-translation Ala-aminoacylated tmRNA acts like a tRNA, entering the A-site of stalled ribosomes, displacing the stalled mRNA. The ribosome then switches to translate the ORF on the tmRNA; the nascent peptide is terminated with the 'tag peptide' encoded by the tmRNA and targeted for degradation. The ribosome is freed to recommence translation, which seems to be the essential function of trans-translation. This chain is SsrA-binding protein, found in Pseudomonas aeruginosa (strain LESB58).